Here is a 370-residue protein sequence, read N- to C-terminus: Quinolinate synthase (370 aa).

Histidine 62 and serine 83 together coordinate iminosuccinate. Cysteine 128 is a [4Fe-4S] cluster binding site. Residues 154–156 and serine 171 contribute to the iminosuccinate site; that span reads YAN. [4Fe-4S] cluster is bound at residue cysteine 215. Residues 241 to 243 and threonine 258 each bind iminosuccinate; that span reads HPE. Cysteine 312 is a [4Fe-4S] cluster binding site.

The protein belongs to the quinolinate synthase family. Type 1 subfamily. [4Fe-4S] cluster is required as a cofactor.

Its subcellular location is the cytoplasm. It catalyses the reaction iminosuccinate + dihydroxyacetone phosphate = quinolinate + phosphate + 2 H2O + H(+). Its pathway is cofactor biosynthesis; NAD(+) biosynthesis; quinolinate from iminoaspartate: step 1/1. Catalyzes the condensation of iminoaspartate with dihydroxyacetone phosphate to form quinolinate. This Neisseria meningitidis serogroup C (strain 053442) protein is Quinolinate synthase.